Here is a 393-residue protein sequence, read N- to C-terminus: Acetate kinase (393 aa).

Asn10 is a binding site for Mg(2+). Residue Lys17 coordinates ATP. Residue Arg89 participates in substrate binding. The Proton donor/acceptor role is filled by Asp146. Residues 204–208, 278–280, and 323–327 contribute to the ATP site; these read HLGNG, DMR, and GVGEN. Residue Glu376 coordinates Mg(2+).

Belongs to the acetokinase family. Homodimer. Mg(2+) is required as a cofactor. It depends on Mn(2+) as a cofactor.

The protein localises to the cytoplasm. The catalysed reaction is acetate + ATP = acetyl phosphate + ADP. It functions in the pathway metabolic intermediate biosynthesis; acetyl-CoA biosynthesis; acetyl-CoA from acetate: step 1/2. In terms of biological role, catalyzes the formation of acetyl phosphate from acetate and ATP. Can also catalyze the reverse reaction. This chain is Acetate kinase, found in Mycoplasma genitalium (strain ATCC 33530 / DSM 19775 / NCTC 10195 / G37) (Mycoplasmoides genitalium).